We begin with the raw amino-acid sequence, 198 residues long: MSISLLGRIVSQQFSGIRAAGPGRSLYLPFTLLLKQPGAYKVTLHRYVHSTQTKSHLSFLMNNNDITPFQKFTVKVLKEQCKSRGLKLSGRKSDLLQRLITHDSCSNKKSSVKINEPKKKRILINDPIKITKKLVSDKTFRTIEKNISSLQNTPVIETPCDVHSHLQPRDRIFLLGFFMLSCLWWNLEPQESKPTIDH.

The transit peptide at 1 to 55 (MSISLLGRIVSQQFSGIRAAGPGRSLYLPFTLLLKQPGAYKVTLHRYVHSTQTKS) directs the protein to the mitochondrion. In terms of domain architecture, SAP spans 69–103 (FQKFTVKVLKEQCKSRGLKLSGRKSDLLQRLITHD). A helical transmembrane segment spans residues 172 to 187 (IFLLGFFMLSCLWWNL).

Belongs to the AIM34 family.

It is found in the mitochondrion membrane. The polypeptide is Altered inheritance of mitochondria protein 34, mitochondrial (AIM34) (Saccharomyces cerevisiae (strain Lalvin EC1118 / Prise de mousse) (Baker's yeast)).